The sequence spans 418 residues: uncharacterized protein (418 aa).

4 disordered regions span residues 123-174, 209-231, 258-302, and 344-418; these read KVKD…DSDK, FDKE…EKEE, KDDN…DEEL, and KDAD…YFKK. Over residues 136 to 154 the composition is skewed to basic and acidic residues; the sequence is NKKDKKDKNKQNEEDHLII. Residues 156–170 show a composition bias toward acidic residues; the sequence is DVIDEEIQEKEDNES. Residues 209 to 227 show a composition bias toward basic and acidic residues; it reads FDKEEKEREKEKEKEKEKE. Residues 266–293 show a composition bias toward low complexity; sequence NQNQNQNQNNNNNNNNNNNNNNNNNNNN. Acidic residues predominate over residues 344–356; that stretch reads KDADDSDDFDEFN. The segment covering 359-374 has biased composition (polar residues); the sequence is DTESQLSKSKQKSPNV. The span at 375 to 390 shows a compositional bias: low complexity; that stretch reads KKTTTTTTTSTSTSSR. Basic residues predominate over residues 391 to 401; sequence KQSKSKLKPKS.

This is an uncharacterized protein from Dictyostelium discoideum (Social amoeba).